The sequence spans 557 residues: Formate--tetrahydrofolate ligase (557 aa).

65–72 (TPAGEGKT) serves as a coordination point for ATP.

It belongs to the formate--tetrahydrofolate ligase family.

It catalyses the reaction (6S)-5,6,7,8-tetrahydrofolate + formate + ATP = (6R)-10-formyltetrahydrofolate + ADP + phosphate. It functions in the pathway one-carbon metabolism; tetrahydrofolate interconversion. In Methylobacterium radiotolerans (strain ATCC 27329 / DSM 1819 / JCM 2831 / NBRC 15690 / NCIMB 10815 / 0-1), this protein is Formate--tetrahydrofolate ligase.